The chain runs to 466 residues: uncharacterized protein (466 aa).

The tract at residues 1–22 (MKKNNERVNTNPSLISKSYNMK) is disordered. A compositionally biased stretch (polar residues) spans 7 to 19 (RVNTNPSLISKSY). Serine 40 and serine 42 each carry phosphoserine. An RRM domain is found at 108–183 (YFVHMDNISP…RLISATITNH (76 aa)). Positions 186-207 (RLPNAEHLESSTKTKDESQDKD) are disordered. Residues 188-207 (PNAEHLESSTKTKDESQDKD) are compositionally biased toward basic and acidic residues. The CID domain maps to 209 to 368 (LTKLDRAKLE…RAWRNFSGNT (160 aa)). The residue at position 371 (serine 371) is a Phosphoserine. The segment covering 425 to 436 (STETSSSSSPQP) has biased composition (low complexity). The disordered stretch occupies residues 425–448 (STETSSSSSPQPTEERKAKFKPSF).

The protein resides in the nucleus. Its subcellular location is the cytoplasm. This is an uncharacterized protein from Schizosaccharomyces pombe (strain 972 / ATCC 24843) (Fission yeast).